A 330-amino-acid polypeptide reads, in one-letter code: Putative protein N-methyltransferase FAM86B2 (330 aa).

M1 carries the N-acetylmethionine modification. S-adenosyl-L-methionine contacts are provided by residues W139, 165–167 (GSG), W228, and A247.

This sequence belongs to the class I-like SAM-binding methyltransferase superfamily. EEF2KMT family. As to quaternary structure, interacts with EEF2KMT.

This chain is Putative protein N-methyltransferase FAM86B2 (FAM86B2), found in Homo sapiens (Human).